The sequence spans 132 residues: Small ribosomal subunit protein uS12 (132 aa).

Aspartate 89 carries the 3-methylthioaspartic acid modification. The interval 103-132 (DTSGVADRRQSRSKYGAKQPKEGGAAKGKK) is disordered.

Belongs to the universal ribosomal protein uS12 family. As to quaternary structure, part of the 30S ribosomal subunit. Contacts proteins S8 and S17. May interact with IF1 in the 30S initiation complex.

Functionally, with S4 and S5 plays an important role in translational accuracy. In terms of biological role, interacts with and stabilizes bases of the 16S rRNA that are involved in tRNA selection in the A site and with the mRNA backbone. Located at the interface of the 30S and 50S subunits, it traverses the body of the 30S subunit contacting proteins on the other side and probably holding the rRNA structure together. The combined cluster of proteins S8, S12 and S17 appears to hold together the shoulder and platform of the 30S subunit. This chain is Small ribosomal subunit protein uS12, found in Chlorobium phaeovibrioides (strain DSM 265 / 1930) (Prosthecochloris vibrioformis (strain DSM 265)).